The following is a 339-amino-acid chain: MLRVAINGFGRIGRSVLRALYESDKRDKIEVVAVNELSQPEAMAHLFQYDSTHGRFQHKVTHDQEYLYIDLPNGSQDKVRILHQADLSLLPWQSLEVDLILDCTGVYGSKADGEKHINAGAKKVLFSHPGGSDLDNTIIYGVNHDTLLPEHRIVSNGSCTTNCIIPVIKAIDDAFGIDSGTITTIHSSMNDQQVIDAYHSDLRRTRAASQSIIPVDTKLHKGIERIFPKFSNKFEAISVRVPTVNVTAMDLSVTINTNVKVNDINQTIVNASRCTLHNIVDYTEAPLVSIDFNHDPHSAIVDGSQTRVSNGHLVKMLVWCDNEWGFANRMLDTALAMSK.

Residue 11 to 12 (RI) participates in NAD(+) binding. Residues 158–160 (SCT), Arg204, 217–218 (TK), and Arg240 each bind substrate. Residue Cys159 is the Nucleophile of the active site. Asn322 contacts NAD(+).

This sequence belongs to the glyceraldehyde-3-phosphate dehydrogenase family. Epd subfamily. Homotetramer.

Its subcellular location is the cytoplasm. It carries out the reaction D-erythrose 4-phosphate + NAD(+) + H2O = 4-phospho-D-erythronate + NADH + 2 H(+). It functions in the pathway cofactor biosynthesis; pyridoxine 5'-phosphate biosynthesis; pyridoxine 5'-phosphate from D-erythrose 4-phosphate: step 1/5. Functionally, catalyzes the NAD-dependent conversion of D-erythrose 4-phosphate to 4-phosphoerythronate. The protein is D-erythrose-4-phosphate dehydrogenase of Aliivibrio fischeri (strain MJ11) (Vibrio fischeri).